A 273-amino-acid chain; its full sequence is Light-independent protochlorophyllide reductase iron-sulfur ATP-binding protein (273 aa).

ATP contacts are provided by residues 12–17 and lysine 41; that span reads GIGKST. Serine 16 contacts Mg(2+). 2 residues coordinate [4Fe-4S] cluster: cysteine 97 and cysteine 131. 182 to 183 serves as a coordination point for ATP; that stretch reads NR.

It belongs to the NifH/BchL/ChlL family. Homodimer. Protochlorophyllide reductase is composed of three subunits; BchL, BchN and BchB. The cofactor is [4Fe-4S] cluster.

The enzyme catalyses chlorophyllide a + oxidized 2[4Fe-4S]-[ferredoxin] + 2 ADP + 2 phosphate = protochlorophyllide a + reduced 2[4Fe-4S]-[ferredoxin] + 2 ATP + 2 H2O. The protein operates within porphyrin-containing compound metabolism; bacteriochlorophyll biosynthesis (light-independent). Its function is as follows. Component of the dark-operative protochlorophyllide reductase (DPOR) that uses Mg-ATP and reduced ferredoxin to reduce ring D of protochlorophyllide (Pchlide) to form chlorophyllide a (Chlide). This reaction is light-independent. The L component serves as a unique electron donor to the NB-component of the complex, and binds Mg-ATP. The chain is Light-independent protochlorophyllide reductase iron-sulfur ATP-binding protein from Chloroflexus aurantiacus (strain ATCC 29364 / DSM 637 / Y-400-fl).